Here is a 255-residue protein sequence, read N- to C-terminus: tRNA (guanine-N(1)-)-methyltransferase (255 aa).

S-adenosyl-L-methionine contacts are provided by residues glycine 113 and 133–138; that span reads IGDYVL.

Belongs to the RNA methyltransferase TrmD family. As to quaternary structure, homodimer.

Its subcellular location is the cytoplasm. The catalysed reaction is guanosine(37) in tRNA + S-adenosyl-L-methionine = N(1)-methylguanosine(37) in tRNA + S-adenosyl-L-homocysteine + H(+). In terms of biological role, specifically methylates guanosine-37 in various tRNAs. In Escherichia coli O127:H6 (strain E2348/69 / EPEC), this protein is tRNA (guanine-N(1)-)-methyltransferase.